Here is a 235-residue protein sequence, read N- to C-terminus: Aspartate/glutamate leucyltransferase (235 aa).

This sequence belongs to the R-transferase family. Bpt subfamily.

Its subcellular location is the cytoplasm. The catalysed reaction is N-terminal L-glutamyl-[protein] + L-leucyl-tRNA(Leu) = N-terminal L-leucyl-L-glutamyl-[protein] + tRNA(Leu) + H(+). The enzyme catalyses N-terminal L-aspartyl-[protein] + L-leucyl-tRNA(Leu) = N-terminal L-leucyl-L-aspartyl-[protein] + tRNA(Leu) + H(+). Functionally, functions in the N-end rule pathway of protein degradation where it conjugates Leu from its aminoacyl-tRNA to the N-termini of proteins containing an N-terminal aspartate or glutamate. The protein is Aspartate/glutamate leucyltransferase of Pseudomonas putida (strain ATCC 700007 / DSM 6899 / JCM 31910 / BCRC 17059 / LMG 24140 / F1).